The chain runs to 304 residues: Oxygen-dependent coproporphyrinogen-III oxidase (304 aa).

Residue serine 93 coordinates substrate. Residues histidine 97 and histidine 107 each coordinate a divalent metal cation. Histidine 107 (proton donor) is an active-site residue. 109–111 (NVR) lines the substrate pocket. A divalent metal cation contacts are provided by histidine 146 and histidine 176. Residues 241-276 (YVEFNLVYDRGTLFGLQSGGRTESILMSLPPQVRWA) form an important for dimerization region. 259–261 (GGR) contributes to the substrate binding site.

It belongs to the aerobic coproporphyrinogen-III oxidase family. In terms of assembly, homodimer. Requires a divalent metal cation as cofactor.

The protein resides in the cytoplasm. It carries out the reaction coproporphyrinogen III + O2 + 2 H(+) = protoporphyrinogen IX + 2 CO2 + 2 H2O. Its pathway is porphyrin-containing compound metabolism; protoporphyrin-IX biosynthesis; protoporphyrinogen-IX from coproporphyrinogen-III (O2 route): step 1/1. Functionally, involved in the heme biosynthesis. Catalyzes the aerobic oxidative decarboxylation of propionate groups of rings A and B of coproporphyrinogen-III to yield the vinyl groups in protoporphyrinogen-IX. This is Oxygen-dependent coproporphyrinogen-III oxidase from Pseudomonas fluorescens (strain Pf0-1).